Reading from the N-terminus, the 47-residue chain is Large ribosomal subunit protein eL40 (47 aa).

The protein belongs to the eukaryotic ribosomal protein eL40 family.

The polypeptide is Large ribosomal subunit protein eL40 (Halobacterium salinarum (strain ATCC 29341 / DSM 671 / R1)).